The chain runs to 332 residues: MKTLGEFIVEKQHEFSHATGELTALLSAIKLGAKIIHRDINKAGLVDILGASGAENVQGEVQQKLDLFANEKLKAALRARDIVAGIASEEEDEIVVFEGCEHAKYVVLMDPLDGSSNIDVNVSVGTIFSIYRRVTPVGTAVTEEDFLQPGNKQVAAGYVVYGSSTMLVYTTGCGVHAFTYDPSLGVFCLCQERMRYPEKGSTYSINEGNYIKFPNGVKKYIKFCQEEDTPTQRPYTSRYIGSLVADFHRNLLKGGIYLYPSTASHPDGKLRLLYECNPMAFLAEQAGGKASDGKERILDITPESLHQRRSFFVGNNHMVEDVERLIREYPDA.

The Mg(2+) site is built by Glu89, Asp110, Leu112, and Asp113. Substrate-binding positions include 113-116, Asn206, Tyr239, 257-259, and Lys269; these read DGSS and YLY. Glu275 serves as a coordination point for Mg(2+).

The protein belongs to the FBPase class 1 family. As to quaternary structure, homotetramer. The cofactor is Mg(2+).

The protein resides in the cytoplasm. It catalyses the reaction beta-D-fructose 1,6-bisphosphate + H2O = beta-D-fructose 6-phosphate + phosphate. The protein operates within carbohydrate biosynthesis; gluconeogenesis. This chain is Fructose-1,6-bisphosphatase class 1, found in Enterobacter sp. (strain 638).